The primary structure comprises 519 residues: ATP synthase subunit beta, mitochondrial (519 aa).

195-202 (GGAGVGKT) is a binding site for ATP.

The protein belongs to the ATPase alpha/beta chains family. F-type ATPases have 2 components, CF(1) - the catalytic core - and CF(0) - the membrane proton channel. CF(1) has five subunits: alpha(3), beta(3), gamma(1), delta(1), epsilon(1). CF(0) has three main subunits: a, b and c.

It localises to the mitochondrion. Its subcellular location is the mitochondrion inner membrane. The catalysed reaction is ATP + H2O + 4 H(+)(in) = ADP + phosphate + 5 H(+)(out). Its function is as follows. Mitochondrial membrane ATP synthase (F(1)F(0) ATP synthase or Complex V) produces ATP from ADP in the presence of a proton gradient across the membrane which is generated by electron transport complexes of the respiratory chain. F-type ATPases consist of two structural domains, F(1) - containing the extramembraneous catalytic core, and F(0) - containing the membrane proton channel, linked together by a central stalk and a peripheral stalk. During catalysis, ATP synthesis in the catalytic domain of F(1) is coupled via a rotary mechanism of the central stalk subunits to proton translocation. Subunits alpha and beta form the catalytic core in F(1). Rotation of the central stalk against the surrounding alpha(3)beta(3) subunits leads to hydrolysis of ATP in three separate catalytic sites on the beta subunits. The sequence is that of ATP synthase subunit beta, mitochondrial (atp-2) from Neurospora crassa (strain ATCC 24698 / 74-OR23-1A / CBS 708.71 / DSM 1257 / FGSC 987).